A 382-amino-acid polypeptide reads, in one-letter code: MKITHITTYRLPPRWMFLKIETDEGVVGWGEPVIEGRARTVEAAVHEFADYLIGKDPARINDLWQVMYRAGFYRGGPIMMSAIAGIDQALWDIKGKVLNAPVWQLMGGLVRDKIKAYSWVGGDRPADVIDGIEKLRGIGFDTFKLNGCEEMGVIDNSRAVDAAVNTVAQIREAFGSEIEFGLDFHGRVSAPMAKVLIKELEPYRPLFIEEPVLAEQAEYYPRLAAQTHIPIAAGERMFSRFEFKRVLDAGGLAILQPDLSHAGGITECYKIAGMAEAYDVALAPHCPLGPIALAACLHIDFVSRNAVFQEQSMGIHYNKGAELLDFVKNKEDFSMDGGFFKPLTKPGLGVDIDEARVIELSKSAPDWRNPLWRHADGSVAEW.

Asp-183 is a binding site for Mg(2+). Residue His-185 is the Proton donor of the active site. 2 residues coordinate Mg(2+): Glu-209 and Glu-235. The active-site Proton acceptor is the His-285.

The protein belongs to the mandelate racemase/muconate lactonizing enzyme family. GalD subfamily. Mg(2+) is required as a cofactor.

It carries out the reaction D-galactonate = 2-dehydro-3-deoxy-D-galactonate + H2O. It participates in carbohydrate acid metabolism; D-galactonate degradation; D-glyceraldehyde 3-phosphate and pyruvate from D-galactonate: step 1/3. Functionally, catalyzes the dehydration of D-galactonate to 2-keto-3-deoxy-D-galactonate. The chain is D-galactonate dehydratase from Salmonella dublin (strain CT_02021853).